Reading from the N-terminus, the 363-residue chain is S-adenosylmethionine:tRNA ribosyltransferase-isomerase (363 aa).

Belongs to the QueA family. As to quaternary structure, monomer.

It localises to the cytoplasm. The catalysed reaction is 7-aminomethyl-7-carbaguanosine(34) in tRNA + S-adenosyl-L-methionine = epoxyqueuosine(34) in tRNA + adenine + L-methionine + 2 H(+). The protein operates within tRNA modification; tRNA-queuosine biosynthesis. In terms of biological role, transfers and isomerizes the ribose moiety from AdoMet to the 7-aminomethyl group of 7-deazaguanine (preQ1-tRNA) to give epoxyqueuosine (oQ-tRNA). The chain is S-adenosylmethionine:tRNA ribosyltransferase-isomerase from Brucella abortus (strain S19).